We begin with the raw amino-acid sequence, 509 residues long: Transcription factor atf-7 (509 aa).

Polar residues predominate over residues Thr283–Ser303. Disordered stretches follow at residues Thr283–Ile318 and Asn337–Arg400. The span at Ser308–Ile318 shows a compositional bias: basic and acidic residues. Residues Asn337–Asn364 show a composition bias toward low complexity. Basic and acidic residues predominate over residues Pro390–Arg400. A bZIP domain is found at Asp391–Leu464. The tract at residues Arg393–Lys413 is basic motif. The tract at residues Met419 to Val450 is leucine-zipper.

Belongs to the bZIP family. In terms of assembly, interacts with serine/threonine kinase pmk-1; perhaps in a manner dependent on dual specificity protein kinase sek-1. As to expression, expressed in intestinal cells.

It is found in the nucleus. The protein resides in the chromosome. Its function is as follows. Transcription factor which regulates the transcription of various genes, including those involved in innate immunity and oxidative stress responses. Binds to promoter regions of genes, probably at 5'-[GACGTCA]-3' consensus sequences. Together with transcription factor daf-19, involved in regulation of the serotonergic response of ADF neurons to pathogenic food. Modulates response to infection by the Gram-negative bacterium P.aeruginosa, acting downstream of the p38 signal transduction pathway effector serine/threonine kinase pmk-1. May act with transcription factor elt-2 to control p38 gene induction in response to bacterial infection. May be phosphorylated by pmk-1. Regulates transcription of the metallothionein gene, mtl-1, perhaps acting downstream of pmk-1. The protein is Transcription factor atf-7 of Caenorhabditis elegans.